The sequence spans 233 residues: H-2 class II histocompatibility antigen, A-F alpha chain (233 aa).

The segment at 1–88 (EDDIEADHVG…KRSNFTPATN (88 aa)) is alpha-1. Over 1–195 (EDDIEADHVG…IPAPMSELTE (195 aa)) the chain is Extracellular. Positions 89–182 (EAPQATVFPK…GLEEPVLKHW (94 aa)) are alpha-2. The Ig-like C1-type domain occupies 91 to 183 (PQATVFPKSP…LEEPVLKHWE (93 aa)). A disulfide bridge links Cys111 with Cys167. Asn122 carries an N-linked (GlcNAc...) asparagine glycan. The interval 183–195 (EPEIPAPMSELTE) is connecting peptide. A helical membrane pass occupies residues 196–221 (TVVCALGLSVGLVGIVVGTIFIIQGL). At 222–233 (RSGGTSRHPGPL) the chain is on the cytoplasmic side.

The protein belongs to the MHC class II family.

The protein resides in the membrane. This is H-2 class II histocompatibility antigen, A-F alpha chain (H2-Aa) from Mus musculus (Mouse).